The chain runs to 270 residues: 3-phenylpropionate-dihydrodiol/cinnamic acid-dihydrodiol dehydrogenase (270 aa).

10-34 (FITGGGSGLGLALVERFIEEGAQVA) is an NAD(+) binding site. Serine 143 provides a ligand contact to substrate. The Proton acceptor role is filled by tyrosine 156.

The protein belongs to the short-chain dehydrogenases/reductases (SDR) family.

The catalysed reaction is 3-(cis-5,6-dihydroxycyclohexa-1,3-dien-1-yl)propanoate + NAD(+) = 3-(2,3-dihydroxyphenyl)propanoate + NADH + H(+). It carries out the reaction (2E)-3-(cis-5,6-dihydroxycyclohexa-1,3-dien-1-yl)prop-2-enoate + NAD(+) = (2E)-3-(2,3-dihydroxyphenyl)prop-2-enoate + NADH + H(+). The protein operates within aromatic compound metabolism; 3-phenylpropanoate degradation. Functionally, converts 3-phenylpropionate-dihydrodiol (PP-dihydrodiol) and cinnamic acid-dihydrodiol (CI-dihydrodiol) into 3-(2,3-dihydroxylphenyl)propanoic acid (DHPP) and 2,3-dihydroxicinnamic acid (DHCI), respectively. The chain is 3-phenylpropionate-dihydrodiol/cinnamic acid-dihydrodiol dehydrogenase from Escherichia coli (strain SMS-3-5 / SECEC).